Here is a 292-residue protein sequence, read N- to C-terminus: MLRRQMSFNGKSDMGILYLVPTPIGNLEDMTFRAIDTLKSVDAIAAEDTRQTKKLCHVYEIETPLVSYHEHNKESSGHKIIEWLKSGKNIALVSDAGLPTISDPGAEIVKDFTDIGGYVVPLPGANAALTALIASGIVPQPFFFYGFLNRQKKEKKKELEALKKRQETIIFYEAPHRLKETLSAMAEILGDREIAVTRELTKKYEEFIRGTISEVIGWANEDQIRGEFCLVVEGSNNEEVDEEEQWWETLTAKEHVEHYISKGATSKEAIKKAAVDRNVPKREVYDAYHIKQ.

The protein belongs to the methyltransferase superfamily. RsmI family.

It localises to the cytoplasm. It carries out the reaction cytidine(1402) in 16S rRNA + S-adenosyl-L-methionine = 2'-O-methylcytidine(1402) in 16S rRNA + S-adenosyl-L-homocysteine + H(+). In terms of biological role, catalyzes the 2'-O-methylation of the ribose of cytidine 1402 (C1402) in 16S rRNA. The sequence is that of Ribosomal RNA small subunit methyltransferase I from Bacillus subtilis (strain 168).